The sequence spans 377 residues: Nitric oxide reductase FlRd-NAD(+) reductase (377 aa).

Belongs to the FAD-dependent oxidoreductase family. The cofactor is FAD.

It is found in the cytoplasm. It catalyses the reaction 2 reduced [nitric oxide reductase rubredoxin domain] + NAD(+) + H(+) = 2 oxidized [nitric oxide reductase rubredoxin domain] + NADH. It participates in nitrogen metabolism; nitric oxide reduction. Its function is as follows. One of at least two accessory proteins for anaerobic nitric oxide (NO) reductase. Reduces the rubredoxin moiety of NO reductase. In Salmonella heidelberg (strain SL476), this protein is Nitric oxide reductase FlRd-NAD(+) reductase.